The sequence spans 305 residues: Flavin-dependent thymidylate synthase (305 aa).

Positions 50–261 (GFVRLIDYLG…PCATASFENH (212 aa)) constitute a ThyX domain. FAD is bound by residues Ser96, 119 to 121 (RHR), and Glu127. DUMP-binding positions include 116–119 (QWMR), 127–131 (EVSSR), and Arg200. The ThyX motif motif lies at 119–129 (RHRTARISEVS). FAD contacts are provided by residues 216-218 (DLH) and His222. DUMP is bound at residue Arg227. Residue Arg227 is the Involved in ionization of N3 of dUMP, leading to its activation of the active site.

This sequence belongs to the thymidylate synthase ThyX family. In terms of assembly, homotetramer. It depends on FAD as a cofactor.

It catalyses the reaction dUMP + (6R)-5,10-methylene-5,6,7,8-tetrahydrofolate + NADPH + H(+) = dTMP + (6S)-5,6,7,8-tetrahydrofolate + NADP(+). It participates in pyrimidine metabolism; dTTP biosynthesis. Functionally, catalyzes the reductive methylation of 2'-deoxyuridine-5'-monophosphate (dUMP) to 2'-deoxythymidine-5'-monophosphate (dTMP) while utilizing 5,10-methylenetetrahydrofolate (mTHF) as the methyl donor, and NADPH and FADH(2) as the reductant. The protein is Flavin-dependent thymidylate synthase of Treponema pallidum (strain Nichols).